An 850-amino-acid polypeptide reads, in one-letter code: Mitogen-activated protein kinase kinase kinase 11 (850 aa).

Position 11 is a phosphoserine (Ser11). Residues 18 to 31 are compositionally biased toward gly residues; that stretch reads GSGSGGGGGSGGVR. The segment at 18–37 is disordered; sequence GSGSGGGGGSGGVRPEGSPK. Position 35 is a phosphoserine (Ser35). One can recognise an SH3 domain in the interval 42-106; it reads YANPVWTALF…PSNYVSRGGG (65 aa). Positions 118-380 constitute a Protein kinase domain; sequence LRLEEVIGIG…ASILQQLEAL (263 aa). ATP contacts are provided by residues 124-132 and Lys145; that span reads IGIGGFGKV. The Proton acceptor role is filled by Asp242. Phosphothreonine; by autocatalysis is present on Thr278. Ser282 carries the post-translational modification Phosphoserine; by autocatalysis and MAP4K1. Phosphoserine is present on Ser395. Leucine-zipper stretches follow at residues 404–425 and 439–460; these read IQGLFDELRAKEKELLSREEEL and LRRREHLLAQWELEVFERELTL. Phosphoserine is present on residues Ser508, Ser525, Ser549, Ser556, and Ser557. Residues 536-850 form a disordered region; that stretch reads LEPAESGQTW…QAPWAPEAGP (315 aa). The segment covering 551 to 563 has biased composition (basic and acidic residues); sequence RRLDDSSNGERRA. Positions 598-610 are enriched in low complexity; sequence SSPLGSPSTPPAL. Residue Ser655 is modified to Phosphoserine. The span at 677–693 shows a compositional bias: pro residues; it reads TAPPPAQMASPCPPDLP. Thr712 carries the post-translational modification Phosphothreonine. Phosphoserine is present on residues Ser728, Ser731, Ser743, Ser751, Ser761, Ser773, Ser792, Ser796, and Ser818. The span at 790–802 shows a compositional bias: pro residues; the sequence is RPSPLPSPQPAPR. Positions 803–819 are enriched in low complexity; sequence RAPWTLFPDSDPFWDSP.

The protein belongs to the protein kinase superfamily. STE Ser/Thr protein kinase family. MAP kinase kinase kinase subfamily. Homodimer; undergoes dimerization during activation. Interacts with MAP2K4/MKK4. Interacts with MAP2K7/MKK7. Found in a complex with SH3RF1, RAC1, MAP2K7/MKK7, MAPK8IP1/JIP1 and MAPK8/JNK1. Mg(2+) serves as cofactor. Autophosphorylation on serine and threonine residues within the activation loop plays a role in enzyme activation. Thr-278 is likely to be the main autophosphorylation site. Phosphorylation of Ser-556 and Ser-557 is induced by CDC42.

The protein localises to the cytoplasm. It localises to the cytoskeleton. It is found in the microtubule organizing center. The protein resides in the centrosome. The enzyme catalyses L-seryl-[protein] + ATP = O-phospho-L-seryl-[protein] + ADP + H(+). It catalyses the reaction L-threonyl-[protein] + ATP = O-phospho-L-threonyl-[protein] + ADP + H(+). Its activity is regulated as follows. Homodimerization via the leucine zipper domains is required for autophosphorylation and subsequent activation. Functionally, activates the JUN N-terminal pathway. Required for serum-stimulated cell proliferation and for mitogen and cytokine activation of MAPK14 (p38), MAPK3 (ERK) and MAPK8 (JNK1) through phosphorylation and activation of MAP2K4/MKK4 and MAP2K7/MKK7. Plays a role in mitogen-stimulated phosphorylation and activation of BRAF, but does not phosphorylate BRAF directly. Influences microtubule organization during the cell cycle. The sequence is that of Mitogen-activated protein kinase kinase kinase 11 (Map3k11) from Rattus norvegicus (Rat).